Here is a 101-residue protein sequence, read N- to C-terminus: 2-amino-4-ketopentanoate thiolase alpha subunit (101 aa).

Belongs to the OrtA family. In terms of assembly, heterodimer with OrtB.

It catalyses the reaction D-alanine + acetyl-CoA = (2R)-2-amino-4-oxopentanoate + CoA. Functionally, involved in the ornithine fermentation pathway. Catalyzes the thiolytic cleavage of 2-amino-4-ketopentanoate (AKP) with coenzyme A (CoA) to form acetyl-CoA and alanine. It is strictly specific for AKP. The polypeptide is 2-amino-4-ketopentanoate thiolase alpha subunit (Unknown prokaryotic organism).